The chain runs to 333 residues: MMEQWLESTPGWSNIALFFGLGALLLAVVLAFVTYGILAERKVMGFMQGRIGPNQVGGRFGLLQTVADVLKLLLKEDTIPKAADRPLYVLAPIIAFVPSFMVLAVLPFTDAFRFADIGVGLLYYIAVSGLTTVGVVAGGWASNNKYALLGGMRAAAQMISYEIPLVMSALGVVLLAGSMNLVDIVAAQKDVWFIFAQPLAFLIFLIAAVAELNRTPFDLPEAESELVAGFHVEYSGFRWAFFMLAEYVYLFAMAALVTILFLGGWHPVAFLGWIPGAVWFALKFCAVVFVLIWFRATFPRVRADQLMEFAWKVLLPLSLVNIVLTAVVKAWFF.

The next 8 helical transmembrane spans lie at 15 to 35 (IALFFGLGALLLAVVLAFVTY), 88 to 108 (YVLAPIIAFVPSFMVLAVLPF), 117 to 137 (IGVGLLYYIAVSGLTTVGVVA), 165 to 185 (LVMSALGVVLLAGSMNLVDIV), 191 to 211 (VWFIFAQPLAFLIFLIAAVAE), 241 to 261 (FFMLAEYVYLFAMAALVTILF), 274 to 294 (IPGAVWFALKFCAVVFVLIWF), and 313 to 333 (VLLPLSLVNIVLTAVVKAWFF).

The protein belongs to the complex I subunit 1 family. As to quaternary structure, NDH-1 is composed of 14 different subunits. Subunits NuoA, H, J, K, L, M, N constitute the membrane sector of the complex.

It is found in the cell membrane. The catalysed reaction is a quinone + NADH + 5 H(+)(in) = a quinol + NAD(+) + 4 H(+)(out). Its function is as follows. NDH-1 shuttles electrons from NADH, via FMN and iron-sulfur (Fe-S) centers, to quinones in the respiratory chain. The immediate electron acceptor for the enzyme in this species is believed to be ubiquinone. Couples the redox reaction to proton translocation (for every two electrons transferred, four hydrogen ions are translocated across the cytoplasmic membrane), and thus conserves the redox energy in a proton gradient. This subunit may bind ubiquinone. The sequence is that of NADH-quinone oxidoreductase subunit H from Geobacillus kaustophilus (strain HTA426).